Here is a 127-residue protein sequence, read N- to C-terminus: Fluoride-specific ion channel FluC (127 aa).

A run of 4 helical transmembrane segments spans residues 6–26 (LAISLGASAGAVSRWLLGLGF), 37–57 (TLLANLLGGYLIGIAVTFFAA), 67–87 (LLVITGFLGGLTTFSTFSAEV), and 96–116 (LLWAGGAIAVHVIGSLVMTLL). Na(+) contacts are provided by glycine 75 and threonine 78.

The protein belongs to the fluoride channel Fluc/FEX (TC 1.A.43) family.

It is found in the cell inner membrane. The catalysed reaction is fluoride(in) = fluoride(out). Its activity is regulated as follows. Na(+) is not transported, but it plays an essential structural role and its presence is essential for fluoride channel function. Fluoride-specific ion channel. Important for reducing fluoride concentration in the cell, thus reducing its toxicity. The protein is Fluoride-specific ion channel FluC of Tolumonas auensis (strain DSM 9187 / NBRC 110442 / TA 4).